Here is a 1374-residue protein sequence, read N- to C-terminus: DNA-directed RNA polymerase subunit beta (1374 aa).

The protein belongs to the RNA polymerase beta chain family. In terms of assembly, the RNAP catalytic core consists of 2 alpha, 1 beta, 1 beta' and 1 omega subunit. When a sigma factor is associated with the core the holoenzyme is formed, which can initiate transcription.

It catalyses the reaction RNA(n) + a ribonucleoside 5'-triphosphate = RNA(n+1) + diphosphate. In terms of biological role, DNA-dependent RNA polymerase catalyzes the transcription of DNA into RNA using the four ribonucleoside triphosphates as substrates. The sequence is that of DNA-directed RNA polymerase subunit beta from Paracidovorax citrulli (strain AAC00-1) (Acidovorax citrulli).